The following is a 525-amino-acid chain: Glucose-6-phosphate isomerase (525 aa).

Glu347 acts as the Proton donor in catalysis. Active-site residues include His378 and Lys493.

Belongs to the GPI family.

Its subcellular location is the cytoplasm. The enzyme catalyses alpha-D-glucose 6-phosphate = beta-D-fructose 6-phosphate. The protein operates within carbohydrate biosynthesis; gluconeogenesis. It participates in carbohydrate degradation; glycolysis; D-glyceraldehyde 3-phosphate and glycerone phosphate from D-glucose: step 2/4. Functionally, catalyzes the reversible isomerization of glucose-6-phosphate to fructose-6-phosphate. This is Glucose-6-phosphate isomerase from Chlamydia trachomatis serovar L2 (strain ATCC VR-902B / DSM 19102 / 434/Bu).